The chain runs to 429 residues: Phosphoribosylamine--glycine ligase (429 aa).

The 208-residue stretch at 108 to 315 (KDFLARHRIP…LVLLVEAALA (208 aa)) folds into the ATP-grasp domain. 134-195 (LHEQGAPIVI…EEFLDGEEAS (62 aa)) is an ATP binding site. Glutamate 285 and asparagine 287 together coordinate Mg(2+).

It belongs to the GARS family. Mg(2+) serves as cofactor. Requires Mn(2+) as cofactor.

It catalyses the reaction 5-phospho-beta-D-ribosylamine + glycine + ATP = N(1)-(5-phospho-beta-D-ribosyl)glycinamide + ADP + phosphate + H(+). It functions in the pathway purine metabolism; IMP biosynthesis via de novo pathway; N(1)-(5-phospho-D-ribosyl)glycinamide from 5-phospho-alpha-D-ribose 1-diphosphate: step 2/2. The sequence is that of Phosphoribosylamine--glycine ligase from Pseudomonas aeruginosa (strain ATCC 15692 / DSM 22644 / CIP 104116 / JCM 14847 / LMG 12228 / 1C / PRS 101 / PAO1).